The primary structure comprises 701 residues: DUF724 domain-containing protein 6 (701 aa).

2 disordered regions span residues 299-353 and 374-452; these read MKTK…KRAN and VEPV…DESC. The segment covering 326–340 has biased composition (basic and acidic residues); that stretch reads LNLEKSAETLTKAES. A compositionally biased stretch (polar residues) spans 381 to 399; that stretch reads RVRTATPLKQTKADTQGKS. Composition is skewed to basic and acidic residues over residues 403–412, 421–430, and 437–449; these read KTLEPMRDEN, KVLEEKNSEK, and RQEE…KETD. A DUF724 domain is found at 514-700; that stretch reads LPFAKKSPFW…LEFQSTASAP (187 aa). Positions 626-670 form a coiled coil; it reads LEKKIEAGEIEGHTYEEEMAELELKILELKRQQVVAKEMKEATDK.

In terms of tissue distribution, expressed in roots, stems and flowers.

It is found in the nucleus. Its function is as follows. May be involved in the polar growth of plant cells via transportation of RNAs. This Arabidopsis thaliana (Mouse-ear cress) protein is DUF724 domain-containing protein 6.